Reading from the N-terminus, the 589-residue chain is NADPH-dependent diflavin oxidoreductase 1 (589 aa).

Residues 5–151 form the Flavodoxin-like domain; that stretch reads ITILYGSETG…YYIEWEAELI (147 aa). Residues 11-16, 60-63, 98-107, and glutamate 133 contribute to the FMN site; these read SETGNA, STTG, and VGDSSYVKYN. In terms of domain architecture, FAD-binding FR-type spans 202–439; that stretch reads DGLKLGTVLE…SIQRSSFKYK (238 aa). Residues arginine 349, 380–383, and 412–415 each bind FAD; these read RMFS and GVCT. NADP(+)-binding positions include threonine 452 and 507–508; that span reads SR. Tryptophan 589 contacts FAD.

Belongs to the NADPH-dependent diflavin oxidoreductase NDOR1 family. This sequence in the N-terminal section; belongs to the flavodoxin family. The protein in the C-terminal section; belongs to the flavoprotein pyridine nucleotide cytochrome reductase family. Interacts with DRE2; as part of the cytosolic iron-sulfur (Fe-S) protein assembly (CIA) machinery. FAD serves as cofactor. It depends on FMN as a cofactor.

The protein resides in the cytoplasm. Its subcellular location is the mitochondrion. It carries out the reaction 2 oxidized [2Fe-2S]-[protein] + NADPH = 2 reduced [2Fe-2S]-[protein] + NADP(+) + H(+). Its function is as follows. NADPH-dependent reductase which is a central component of the cytosolic iron-sulfur (Fe-S) protein assembly (CIA) machinery. Transfers electrons from NADPH via its FAD and FMN prosthetic groups to the [2Fe-2S] cluster of DRE2, another key component of the CIA machinery. In turn, this reduced cluster provides electrons for assembly of cytosolic iron-sulfur cluster proteins. Positively controls H(2)O(2)-induced cell death. This Candida albicans (strain SC5314 / ATCC MYA-2876) (Yeast) protein is NADPH-dependent diflavin oxidoreductase 1.